The sequence spans 620 residues: Probable potassium transport system protein Kup (620 aa).

The next 12 helical transmembrane spans lie at 11–31 (LAFL…LYAF), 51–71 (ILSL…LLLV), 100–120 (IAML…VITP), 138–158 (LAPY…AVQA), 167–187 (FFAP…AHAI), 202–222 (AVHF…LVVL), 246–266 (WFAL…AYLL), 288–308 (LILL…SGIF), 334–354 (GQIY…FVML), 364–384 (AAYG…LVLV), 396–416 (VVTI…STST), and 418–438 (LMEG…VMYI).

Belongs to the HAK/KUP transporter (TC 2.A.72) family.

It is found in the cell inner membrane. The enzyme catalyses K(+)(in) + H(+)(in) = K(+)(out) + H(+)(out). Transport of potassium into the cell. Likely operates as a K(+):H(+) symporter. This chain is Probable potassium transport system protein Kup, found in Vibrio cholerae serotype O1 (strain ATCC 39315 / El Tor Inaba N16961).